A 301-amino-acid chain; its full sequence is Probable alpha-L-glutamate ligase (301 aa).

One can recognise an ATP-grasp domain in the interval 104-287 (MQLLSRKGIG…VAGLIIDFIE (184 aa)). Residues Lys-141, 178-179 (EF), Asp-187, and 211-213 (RSN) contribute to the ATP site. 3 residues coordinate Mg(2+): Asp-248, Glu-260, and Asn-262. Mn(2+) is bound by residues Asp-248, Glu-260, and Asn-262.

This sequence belongs to the RimK family. It depends on Mg(2+) as a cofactor. Requires Mn(2+) as cofactor.

The chain is Probable alpha-L-glutamate ligase from Aliivibrio fischeri (strain MJ11) (Vibrio fischeri).